A 347-amino-acid polypeptide reads, in one-letter code: Glycerol-3-phosphate dehydrogenase [NAD(P)+] (347 aa).

Positions 20, 39, and 118 each coordinate NADPH. Positions 118, 152, and 154 each coordinate sn-glycerol 3-phosphate. A156 serves as a coordination point for NADPH. 5 residues coordinate sn-glycerol 3-phosphate: K207, D260, S270, R271, and N272. Catalysis depends on K207, which acts as the Proton acceptor. R271 serves as a coordination point for NADPH. NADPH-binding residues include V295 and E297.

It belongs to the NAD-dependent glycerol-3-phosphate dehydrogenase family.

It is found in the cytoplasm. It carries out the reaction sn-glycerol 3-phosphate + NAD(+) = dihydroxyacetone phosphate + NADH + H(+). It catalyses the reaction sn-glycerol 3-phosphate + NADP(+) = dihydroxyacetone phosphate + NADPH + H(+). Its pathway is membrane lipid metabolism; glycerophospholipid metabolism. Its function is as follows. Catalyzes the reduction of the glycolytic intermediate dihydroxyacetone phosphate (DHAP) to sn-glycerol 3-phosphate (G3P), the key precursor for phospholipid synthesis. The protein is Glycerol-3-phosphate dehydrogenase [NAD(P)+] of Cupriavidus pinatubonensis (strain JMP 134 / LMG 1197) (Cupriavidus necator (strain JMP 134)).